Reading from the N-terminus, the 2179-residue chain is Genome polyprotein (2179 aa).

Disordered regions lie at residues 503–531 (FSKD…PTGD), 623–678 (QPQK…YPIQ), 703–738 (RAKK…GDQF), and 753–847 (EPSV…PPKM). 2 stretches are compositionally biased toward polar residues: residues 630-642 (DTPS…QPFH) and 659-678 (TTFA…YPIQ). Over residues 758 to 770 (SEDTSSQSYISTE) the composition is skewed to polar residues. The span at 783-806 (SEESTQLSQLSSSSNDSPENNENT) shows a compositional bias: low complexity. Over residues 819 to 831 (EISEVEDEVDGMT) the composition is skewed to acidic residues. The CCHC-type zinc-finger motif lies at 1112–1125 (CFTCGKIGHFSRNC). The active-site For protease activity; shared with dimeric partner is the Asp-1226. In terms of domain architecture, Reverse transcriptase spans 1409-1591 (QQFDLIEPSD…NKIQFLGMDF (183 aa)). The Mg(2+) site is built by Asp-1479, Asp-1542, and Asp-1543. Disordered stretches follow at residues 1822-1848 (QRRT…KLSH), 2114-2144 (NIVK…KNKC), and 2160-2179 (YSTK…EPCV). A compositionally biased stretch (low complexity) spans 1827–1840 (SSSTKSKADSSQST). Positions 2120–2144 (PRKRKGKAKSRSSTRSEKRRAKNKC) are enriched in basic residues. The segment covering 2162–2179 (TKPSTPSWTQDSSSEPCV) has biased composition (polar residues).

The protein belongs to the Petuviruses genome polyprotein family.

It catalyses the reaction DNA(n) + a 2'-deoxyribonucleoside 5'-triphosphate = DNA(n+1) + diphosphate. Functionally, encodes presumably for at least four polypeptides: Movement protein (MP), capsid protein (CP), Protease (PR), and reverse transcriptase (RT). In Petunia vein clearing virus (isolate Shepherd) (PVCV), this protein is Genome polyprotein.